Reading from the N-terminus, the 146-residue chain is uncharacterized protein (146 aa).

Residues 7–27 (FVLSITIVLVILIIIAFIWYN) form a helical membrane-spanning segment.

The protein belongs to the asfivirus E146L family.

It is found in the host membrane. The protein resides in the virion. This is an uncharacterized protein from Ornithodoros (relapsing fever ticks).